The primary structure comprises 457 residues: Bifunctional protein GlmU (457 aa).

Residues 1–227 form a pyrophosphorylase region; the sequence is MTQLSVVILA…FMEVEGANNR (227 aa). UDP-N-acetyl-alpha-D-glucosamine contacts are provided by residues 9–12, Lys-23, Gln-74, 79–80, 101–103, Gly-138, Glu-152, Asn-167, and Asn-225; these read LAAG, GT, and YGD. Asp-103 is a binding site for Mg(2+). Asn-225 lines the Mg(2+) pocket. Residues 228–248 form a linker region; sequence LQLAALERFYQKTQAEKLLLA. The tract at residues 249 to 457 is N-acetyltransferase; that stretch reads GVRLIDPARF…QRPTKKKIAD (209 aa). Arg-331 and Lys-349 together coordinate UDP-N-acetyl-alpha-D-glucosamine. The active-site Proton acceptor is His-361. Tyr-364 and Asn-375 together coordinate UDP-N-acetyl-alpha-D-glucosamine. Acetyl-CoA-binding positions include Ala-378, 384–385, Ser-403, Ala-421, and Arg-438; that span reads NY.

This sequence in the N-terminal section; belongs to the N-acetylglucosamine-1-phosphate uridyltransferase family. It in the C-terminal section; belongs to the transferase hexapeptide repeat family. As to quaternary structure, homotrimer. Mg(2+) is required as a cofactor.

The protein localises to the cytoplasm. The catalysed reaction is alpha-D-glucosamine 1-phosphate + acetyl-CoA = N-acetyl-alpha-D-glucosamine 1-phosphate + CoA + H(+). It catalyses the reaction N-acetyl-alpha-D-glucosamine 1-phosphate + UTP + H(+) = UDP-N-acetyl-alpha-D-glucosamine + diphosphate. The protein operates within nucleotide-sugar biosynthesis; UDP-N-acetyl-alpha-D-glucosamine biosynthesis; N-acetyl-alpha-D-glucosamine 1-phosphate from alpha-D-glucosamine 6-phosphate (route II): step 2/2. It functions in the pathway nucleotide-sugar biosynthesis; UDP-N-acetyl-alpha-D-glucosamine biosynthesis; UDP-N-acetyl-alpha-D-glucosamine from N-acetyl-alpha-D-glucosamine 1-phosphate: step 1/1. Its pathway is bacterial outer membrane biogenesis; LPS lipid A biosynthesis. Catalyzes the last two sequential reactions in the de novo biosynthetic pathway for UDP-N-acetylglucosamine (UDP-GlcNAc). The C-terminal domain catalyzes the transfer of acetyl group from acetyl coenzyme A to glucosamine-1-phosphate (GlcN-1-P) to produce N-acetylglucosamine-1-phosphate (GlcNAc-1-P), which is converted into UDP-GlcNAc by the transfer of uridine 5-monophosphate (from uridine 5-triphosphate), a reaction catalyzed by the N-terminal domain. The sequence is that of Bifunctional protein GlmU from Actinobacillus pleuropneumoniae serotype 5b (strain L20).